Reading from the N-terminus, the 660-residue chain is tRNA 5-methylaminomethyl-2-thiouridine biosynthesis bifunctional protein MnmC (660 aa).

The segment at 1-242 (MTDRIVPATL…KRAMLVGEFA (242 aa)) is tRNA (mnm(5)s(2)U34)-methyltransferase. Residues 266–660 (IGAGLAGCAV…VRALRHGRVA (395 aa)) form an FAD-dependent cmnm(5)s(2)U34 oxidoreductase region.

In the N-terminal section; belongs to the methyltransferase superfamily. tRNA (mnm(5)s(2)U34)-methyltransferase family. It in the C-terminal section; belongs to the DAO family. Requires FAD as cofactor.

Its subcellular location is the cytoplasm. It catalyses the reaction 5-aminomethyl-2-thiouridine(34) in tRNA + S-adenosyl-L-methionine = 5-methylaminomethyl-2-thiouridine(34) in tRNA + S-adenosyl-L-homocysteine + H(+). Catalyzes the last two steps in the biosynthesis of 5-methylaminomethyl-2-thiouridine (mnm(5)s(2)U) at the wobble position (U34) in tRNA. Catalyzes the FAD-dependent demodification of cmnm(5)s(2)U34 to nm(5)s(2)U34, followed by the transfer of a methyl group from S-adenosyl-L-methionine to nm(5)s(2)U34, to form mnm(5)s(2)U34. The chain is tRNA 5-methylaminomethyl-2-thiouridine biosynthesis bifunctional protein MnmC from Burkholderia mallei (strain NCTC 10247).